Here is a 143-residue protein sequence, read N- to C-terminus: Large ribosomal subunit protein uL11 (143 aa).

This sequence belongs to the universal ribosomal protein uL11 family. In terms of assembly, part of the ribosomal stalk of the 50S ribosomal subunit. Interacts with L10 and the large rRNA to form the base of the stalk. L10 forms an elongated spine to which L12 dimers bind in a sequential fashion forming a multimeric L10(L12)X complex. One or more lysine residues are methylated.

In terms of biological role, forms part of the ribosomal stalk which helps the ribosome interact with GTP-bound translation factors. The polypeptide is Large ribosomal subunit protein uL11 (Borrelia garinii subsp. bavariensis (strain ATCC BAA-2496 / DSM 23469 / PBi) (Borreliella bavariensis)).